Consider the following 266-residue polypeptide: Hydroxyacylglutathione hydrolase (266 aa).

The Zn(2+) site is built by His53, His55, Asp57, His58, His118, Asp140, and His178.

This sequence belongs to the metallo-beta-lactamase superfamily. Glyoxalase II family. Monomer. Requires Zn(2+) as cofactor.

The catalysed reaction is an S-(2-hydroxyacyl)glutathione + H2O = a 2-hydroxy carboxylate + glutathione + H(+). The protein operates within secondary metabolite metabolism; methylglyoxal degradation; (R)-lactate from methylglyoxal: step 2/2. In terms of biological role, thiolesterase that catalyzes the hydrolysis of S-D-lactoyl-glutathione to form glutathione and D-lactic acid. The chain is Hydroxyacylglutathione hydrolase from Cupriavidus taiwanensis (strain DSM 17343 / BCRC 17206 / CCUG 44338 / CIP 107171 / LMG 19424 / R1) (Ralstonia taiwanensis (strain LMG 19424)).